A 565-amino-acid chain; its full sequence is Peptide transport periplasmic protein SapA (565 aa).

The first 23 residues, 1 to 23 (MLRLNLRFLSFLLCIIQSVELQA), serve as a signal peptide directing secretion.

It belongs to the bacterial solute-binding protein 5 family.

Its subcellular location is the periplasm. Involved in a peptide intake transport system that plays a role in the resistance to antimicrobial peptides. The polypeptide is Peptide transport periplasmic protein SapA (sapA) (Haemophilus influenzae (strain ATCC 51907 / DSM 11121 / KW20 / Rd)).